Here is a 273-residue protein sequence, read N- to C-terminus: Putative pyruvate, phosphate dikinase regulatory protein (273 aa).

153 to 160 (GVSRTSKS) serves as a coordination point for ADP.

Belongs to the pyruvate, phosphate/water dikinase regulatory protein family. PDRP subfamily.

The catalysed reaction is N(tele)-phospho-L-histidyl/L-threonyl-[pyruvate, phosphate dikinase] + ADP = N(tele)-phospho-L-histidyl/O-phospho-L-threonyl-[pyruvate, phosphate dikinase] + AMP + H(+). It carries out the reaction N(tele)-phospho-L-histidyl/O-phospho-L-threonyl-[pyruvate, phosphate dikinase] + phosphate + H(+) = N(tele)-phospho-L-histidyl/L-threonyl-[pyruvate, phosphate dikinase] + diphosphate. Its function is as follows. Bifunctional serine/threonine kinase and phosphorylase involved in the regulation of the pyruvate, phosphate dikinase (PPDK) by catalyzing its phosphorylation/dephosphorylation. The sequence is that of Putative pyruvate, phosphate dikinase regulatory protein from Ehrlichia chaffeensis (strain ATCC CRL-10679 / Arkansas).